A 199-amino-acid polypeptide reads, in one-letter code: Ribonuclease P protein subunit p25 (199 aa).

The span at 1–11 (MENFRKVRSEE) shows a compositional bias: basic and acidic residues. Disordered stretches follow at residues 1 to 28 (MENF…SGPF) and 144 to 199 (LDPR…DQTA). A compositionally biased stretch (pro residues) spans 151-166 (YQPPNPHPGPSSPPAA). Ser-172 and Ser-182 each carry phosphoserine.

The protein belongs to the histone-like Alba family. In terms of assembly, component of nuclear RNase P and RNase MRP ribonucleoproteins. RNase P consists of a catalytic RNA moiety and 10 different protein chains; POP1, POP4, POP5, POP7, RPP14, RPP21, RPP25, RPP30, RPP38 and RPP40. Within the RNase P complex, POP1, POP7 and RPP25 form the 'finger' subcomplex, POP5, RPP14, RPP40 and homodimeric RPP30 form the 'palm' subcomplex, and RPP21, POP4 and RPP38 form the 'wrist' subcomplex. All subunits of the RNase P complex interact with the catalytic RNA. Several subunits of RNase P are also part of the RNase MRP complex. RNase MRP consists of a catalytic RNA moiety and about 8 protein subunits; POP1, POP7, RPP25, RPP30, RPP38, RPP40 and possibly also POP4 and POP5. POP7 forms a heterodimer with RPP25 that binds to the P3 stem loop of the catalytic RNA.

The protein resides in the nucleus. It is found in the nucleolus. Its function is as follows. Component of ribonuclease P, a ribonucleoprotein complex that generates mature tRNA molecules by cleaving their 5'-ends. Also a component of the MRP ribonuclease complex, which cleaves pre-rRNA sequences. The protein is Ribonuclease P protein subunit p25 (RPP25) of Homo sapiens (Human).